Reading from the N-terminus, the 190-residue chain is U1 small nuclear ribonucleoprotein C-1 (190 aa).

The Matrin-type zinc-finger motif lies at 4-36; it reads YYCDYCDVFLVSESPSVRKAHNSGRNHLTNVRD. Positions 57-190 are disordered; it reads FETGGGNSTS…PDRARQLGLI (134 aa). The segment covering 72–82 has biased composition (pro residues); that stretch reads GNPPGSQPGPP. Positions 109–124 are enriched in low complexity; that stretch reads AMLALMNGQNGMSSPG. A compositionally biased stretch (pro residues) spans 125–141; the sequence is SGPPPMRFAGPPIPNNM. Residues 180-190 are compositionally biased toward basic and acidic residues; the sequence is NPDRARQLGLI.

Belongs to the U1 small nuclear ribonucleoprotein C family. As to quaternary structure, U1 snRNP is composed of the 7 core Sm proteins B/B', D1, D2, D3, E, F and G that assemble in a heptameric protein ring on the Sm site of the small nuclear RNA to form the core snRNP, and at least 3 U1 snRNP-specific proteins U1-70K, U1-A and U1-C. U1-C interacts with U1 snRNA and the 5' splice-site region of the pre-mRNA.

It localises to the nucleus. Functionally, component of the spliceosomal U1 snRNP, which is essential for recognition of the pre-mRNA 5' splice-site and the subsequent assembly of the spliceosome. U1-C is directly involved in initial 5' splice-site recognition for both constitutive and regulated alternative splicing. The interaction with the 5' splice-site seems to precede base-pairing between the pre-mRNA and the U1 snRNA. Stimulates commitment or early (E) complex formation by stabilizing the base pairing of the 5' end of the U1 snRNA and the 5' splice-site region. The sequence is that of U1 small nuclear ribonucleoprotein C-1 from Puccinia graminis f. sp. tritici (strain CRL 75-36-700-3 / race SCCL) (Black stem rust fungus).